A 292-amino-acid polypeptide reads, in one-letter code: 4-hydroxy-tetrahydrodipicolinate synthase (292 aa).

Position 48 (threonine 48) interacts with pyruvate. Tyrosine 136 (proton donor/acceptor) is an active-site residue. Lysine 164 serves as the catalytic Schiff-base intermediate with substrate. Residue isoleucine 204 participates in pyruvate binding.

This sequence belongs to the DapA family. Homotetramer; dimer of dimers.

It is found in the cytoplasm. It catalyses the reaction L-aspartate 4-semialdehyde + pyruvate = (2S,4S)-4-hydroxy-2,3,4,5-tetrahydrodipicolinate + H2O + H(+). The protein operates within amino-acid biosynthesis; L-lysine biosynthesis via DAP pathway; (S)-tetrahydrodipicolinate from L-aspartate: step 3/4. Catalyzes the condensation of (S)-aspartate-beta-semialdehyde [(S)-ASA] and pyruvate to 4-hydroxy-tetrahydrodipicolinate (HTPA). This is 4-hydroxy-tetrahydrodipicolinate synthase from Acetivibrio thermocellus (strain ATCC 27405 / DSM 1237 / JCM 9322 / NBRC 103400 / NCIMB 10682 / NRRL B-4536 / VPI 7372) (Clostridium thermocellum).